Consider the following 315-residue polypeptide: Probable carboxylesterase 3 (315 aa).

Met-1 bears the N-acetylmethionine mark. The Involved in the stabilization of the negatively charged intermediate by the formation of the oxyanion hole signature appears at 81-83; it reads HGG. Catalysis depends on residues Ser-160, Asp-258, and His-290.

Belongs to the 'GDXG' lipolytic enzyme family. Expressed in flowers and siliques.

It carries out the reaction a carboxylic ester + H2O = an alcohol + a carboxylate + H(+). Carboxylesterase acting on esters with varying acyl chain length. The polypeptide is Probable carboxylesterase 3 (CXE3) (Arabidopsis thaliana (Mouse-ear cress)).